The sequence spans 43 residues: Protein PsbN (43 aa).

A helical transmembrane segment spans residues 5-27 (TLVAISISRLLVSFTGYALYTAF).

It belongs to the PsbN family.

It localises to the plastid. Its subcellular location is the chloroplast thylakoid membrane. Its function is as follows. May play a role in photosystem I and II biogenesis. This chain is Protein PsbN, found in Cycas taitungensis (Prince sago).